The following is a 423-amino-acid chain: Histidine--tRNA ligase 2 (423 aa).

The protein belongs to the class-II aminoacyl-tRNA synthetase family. Homodimer.

The protein resides in the cytoplasm. The catalysed reaction is tRNA(His) + L-histidine + ATP = L-histidyl-tRNA(His) + AMP + diphosphate + H(+). The polypeptide is Histidine--tRNA ligase 2 (Bacillus cereus (strain ATCC 10987 / NRS 248)).